We begin with the raw amino-acid sequence, 189 residues long: Elongation factor P (189 aa).

Lys34 is modified (N6-(3,6-diaminohexanoyl)-5-hydroxylysine).

The protein belongs to the elongation factor P family. May be beta-lysylated on the epsilon-amino group of Lys-34 by the combined action of EpmA and EpmB, and then hydroxylated on the C5 position of the same residue by EpmC (if this protein is present). Lysylation is critical for the stimulatory effect of EF-P on peptide-bond formation. The lysylation moiety may extend toward the peptidyltransferase center and stabilize the terminal 3-CCA end of the tRNA. Hydroxylation of the C5 position on Lys-34 may allow additional potential stabilizing hydrogen-bond interactions with the P-tRNA.

It localises to the cytoplasm. It participates in protein biosynthesis; polypeptide chain elongation. In terms of biological role, involved in peptide bond synthesis. Alleviates ribosome stalling that occurs when 3 or more consecutive Pro residues or the sequence PPG is present in a protein, possibly by augmenting the peptidyl transferase activity of the ribosome. Modification of Lys-34 is required for alleviation. This chain is Elongation factor P, found in Acinetobacter baumannii (strain AB307-0294).